The primary structure comprises 316 residues: Pantothenate kinase (316 aa).

95–102 lines the ATP pocket; the sequence is GSVAVGKS.

This sequence belongs to the prokaryotic pantothenate kinase family.

Its subcellular location is the cytoplasm. It carries out the reaction (R)-pantothenate + ATP = (R)-4'-phosphopantothenate + ADP + H(+). The protein operates within cofactor biosynthesis; coenzyme A biosynthesis; CoA from (R)-pantothenate: step 1/5. The polypeptide is Pantothenate kinase (Shewanella baltica (strain OS223)).